Reading from the N-terminus, the 831-residue chain is Translation initiation factor IF-2 (831 aa).

Residues 1 to 11 are compositionally biased toward basic and acidic residues; sequence MADEIKKENAP. The disordered stretch occupies residues 1-236; that stretch reads MADEIKKENA…GKHAKKASAL (236 aa). Residues 22–31 show a composition bias toward low complexity; that stretch reads TTVSGTSTTG. Composition is skewed to basic and acidic residues over residues 49–150 and 157–166; these read DLER…RYAD and DNGKLDDYSD. Over residues 190–200 the composition is skewed to basic residues; it reads RSKNKVVKAKK. The span at 201–225 shows a compositional bias: basic and acidic residues; it reads GGRDDENGNKNERQSDRRNQKDVKG. Residues 330–500 form the tr-type G domain; that stretch reads HRAPVVTIMG…LLQSEVLELT (171 aa). The segment at 339 to 346 is G1; the sequence is GHVDHGKT. GTP is bound at residue 339–346; it reads GHVDHGKT. The interval 364–368 is G2; it reads GITQH. The interval 386–389 is G3; that stretch reads DTPG. GTP contacts are provided by residues 386–390 and 440–443; these read DTPGH and NKID. A G4 region spans residues 440–443; sequence NKID. The interval 476–478 is G5; sequence SAK.

This sequence belongs to the TRAFAC class translation factor GTPase superfamily. Classic translation factor GTPase family. IF-2 subfamily.

The protein resides in the cytoplasm. In terms of biological role, one of the essential components for the initiation of protein synthesis. Protects formylmethionyl-tRNA from spontaneous hydrolysis and promotes its binding to the 30S ribosomal subunits. Also involved in the hydrolysis of GTP during the formation of the 70S ribosomal complex. The chain is Translation initiation factor IF-2 from Histophilus somni (strain 2336) (Haemophilus somnus).